Consider the following 486-residue polypeptide: Small ribosomal subunit protein uS17B (486 aa).

The interval 1 to 112 (MRDIGINGIK…IENKSNINFV (112 aa)) is 30S ribosomal protein S17. A unknown region spans residues 113-486 (DNLLNVDDKW…ELWTRKNYKS (374 aa)).

Belongs to the universal ribosomal protein uS17 family. Part of the 30S ribosomal subunit.

In terms of biological role, one of the primary rRNA binding proteins, it binds specifically to the 5'-end of 16S ribosomal RNA. In Methanosarcina acetivorans (strain ATCC 35395 / DSM 2834 / JCM 12185 / C2A), this protein is Small ribosomal subunit protein uS17B.